The primary structure comprises 422 residues: E3 ubiquitin-protein ligase IE2 (422 aa).

Positions 1–10 are enriched in polar residues; sequence MSRQINAVTP. Disordered stretches follow at residues 1–86 and 165–215; these read MSRQ…VQII and SPRS…EGEE. Residues 14–26 are compositionally biased toward basic residues; it reads SRRHRLSLSRRRI. Low complexity predominate over residues 36-63; the sequence is PSSSSRSQPSSSSRSQPYSSSRSQPYSS. Residues 71-80 are compositionally biased toward basic and acidic residues; it reads ERSQEQRVSE. The span at 179-196 shows a compositional bias: polar residues; it reads DVLSQSPDLFDSPQSPQQ. Over residues 200 to 215 the composition is skewed to acidic residues; it reads ELEDEDEEEEEEEGEE. Residues 220–268 form an RING-type; degenerate zinc finger; that stretch reads CNICFTTLKDTKNVDSSFVTSIDCNHAVCFKCYVRIIMDNSTYKCFCSA. Positions 314–414 form a coiled coil; the sequence is IDLNDVERLE…RRNSELVAEL (101 aa).

The protein belongs to the alphabaculovirus IE2 protein family. In terms of assembly, homooligomer. In terms of processing, auto-ubiquitinated.

Its subcellular location is the host nucleus. The catalysed reaction is S-ubiquitinyl-[E2 ubiquitin-conjugating enzyme]-L-cysteine + [acceptor protein]-L-lysine = [E2 ubiquitin-conjugating enzyme]-L-cysteine + N(6)-ubiquitinyl-[acceptor protein]-L-lysine.. Functionally, RING-finger E3 ubiquitin ligase that plays an important regulatory role during the initial stages of infection. Migrates to specific nuclear foci early in infection supposely to prepare the sites for viral replication by targeting and ubiquitinating host proteins. The chain is E3 ubiquitin-protein ligase IE2 (IE2) from Bombyx mori nuclear polyhedrosis virus (BmNPV).